A 102-amino-acid polypeptide reads, in one-letter code: Large ribosomal subunit protein eL31 (102 aa).

Belongs to the eukaryotic ribosomal protein eL31 family.

The sequence is that of Large ribosomal subunit protein eL31 from Staphylothermus marinus (strain ATCC 43588 / DSM 3639 / JCM 9404 / F1).